A 294-amino-acid chain; its full sequence is 4-hydroxy-tetrahydrodipicolinate synthase (294 aa).

Thr48 contacts pyruvate. Tyr136 (proton donor/acceptor) is an active-site residue. Lys164 functions as the Schiff-base intermediate with substrate in the catalytic mechanism. Val206 provides a ligand contact to pyruvate.

It belongs to the DapA family. As to quaternary structure, homotetramer; dimer of dimers.

The protein localises to the cytoplasm. It catalyses the reaction L-aspartate 4-semialdehyde + pyruvate = (2S,4S)-4-hydroxy-2,3,4,5-tetrahydrodipicolinate + H2O + H(+). Its pathway is amino-acid biosynthesis; L-lysine biosynthesis via DAP pathway; (S)-tetrahydrodipicolinate from L-aspartate: step 3/4. Its function is as follows. Catalyzes the condensation of (S)-aspartate-beta-semialdehyde [(S)-ASA] and pyruvate to 4-hydroxy-tetrahydrodipicolinate (HTPA). The protein is 4-hydroxy-tetrahydrodipicolinate synthase of Desulforudis audaxviator (strain MP104C).